A 363-amino-acid polypeptide reads, in one-letter code: NAD(P)H-quinone oxidoreductase subunit 1, chloroplastic (363 aa).

6 helical membrane-spanning segments follow: residues 27–47 (IWLLVPIFTPVSGITIGVLVI), 98–118 (FSIGPSIAIISILLSYSVIPF), 127–147 (LSIGVFLWIAISSIAPIGLLM), 248–268 (YSGIKFGLFYVASYLNLLVSS), 300–320 (VFGTTIGIFITLAKAYLFLFI), and 336–356 (LLNLGWKFLLPISLGNLLLTT).

Belongs to the complex I subunit 1 family. As to quaternary structure, NDH is composed of at least 16 different subunits, 5 of which are encoded in the nucleus.

It localises to the plastid. The protein resides in the chloroplast thylakoid membrane. It catalyses the reaction a plastoquinone + NADH + (n+1) H(+)(in) = a plastoquinol + NAD(+) + n H(+)(out). It carries out the reaction a plastoquinone + NADPH + (n+1) H(+)(in) = a plastoquinol + NADP(+) + n H(+)(out). Its function is as follows. NDH shuttles electrons from NAD(P)H:plastoquinone, via FMN and iron-sulfur (Fe-S) centers, to quinones in the photosynthetic chain and possibly in a chloroplast respiratory chain. The immediate electron acceptor for the enzyme in this species is believed to be plastoquinone. Couples the redox reaction to proton translocation, and thus conserves the redox energy in a proton gradient. This is NAD(P)H-quinone oxidoreductase subunit 1, chloroplastic from Platanus occidentalis (Sycamore).